Here is a 1662-residue protein sequence, read N- to C-terminus: ABC transporter A family member 5 (1662 aa).

The next 7 membrane-spanning stretches (helical) occupy residues 30–50 (IVFPIIIVLLVFAILVLVQLF), 242–262 (SVFVSAALLIFTFRLVTELVV), 284–304 (ISWIITSLVTALPIDLIIIVI), 317–337 (IIVIVTLILYLLTLQLLAFIF), 346–366 (FAGLLTFLTILLINICGIFIG), 377–397 (LLLCCIFSPIGIACSFYIMSI), and 417–437 (QIIGTFVFNIIFYTFLIWYLD). Residues 505-739 (ISIRNLRKEF…YGVGYLLTCS (235 aa)) form the ABC transporter 1 domain. An ATP-binding site is contributed by 541-548 (GPNGSGKS). 7 helical membrane-spanning segments follow: residues 872-892 (FKAFLLSLLLPLLVIIGSIIV), 1052-1072 (IVYFIVIMMAGFSLMAGSFAG), 1102-1122 (LWDYFFAFILLLITCIILAIV), 1130-1150 (FGLFFLSLVLFSLSIIPLSYL), 1163-1183 (GAITAIHFSIGVIMTIAMIIL), 1201-1221 (IIDIVFNILSPLYAFSRVIFI), and 1246-1266 (STPIIILSVHVVVWTIFILLI). The 236-residue stretch at 1322–1557 (LQYKGLHKLF…FGAGYSVEVK (236 aa)) folds into the ABC transporter 2 domain. 1360-1367 (GLNGAGKT) lines the ATP pocket.

This sequence belongs to the ABC transporter superfamily. ABCA family.

It localises to the membrane. This chain is ABC transporter A family member 5 (abcA5), found in Dictyostelium discoideum (Social amoeba).